The chain runs to 341 residues: Holliday junction branch migration complex subunit RuvB (341 aa).

The segment at M1 to Y182 is large ATPase domain (RuvB-L). Residues L21, R22, G63, K66, T67, T68, E129–F131, R172, Y182, and R219 each bind ATP. T67 contacts Mg(2+). The tract at residues T183–G253 is small ATPAse domain (RuvB-S). The tract at residues Q256–G341 is head domain (RuvB-H). Residues R292, R311, and R316 each coordinate DNA.

Belongs to the RuvB family. Homohexamer. Forms an RuvA(8)-RuvB(12)-Holliday junction (HJ) complex. HJ DNA is sandwiched between 2 RuvA tetramers; dsDNA enters through RuvA and exits via RuvB. An RuvB hexamer assembles on each DNA strand where it exits the tetramer. Each RuvB hexamer is contacted by two RuvA subunits (via domain III) on 2 adjacent RuvB subunits; this complex drives branch migration. In the full resolvosome a probable DNA-RuvA(4)-RuvB(12)-RuvC(2) complex forms which resolves the HJ.

The protein localises to the cytoplasm. It carries out the reaction ATP + H2O = ADP + phosphate + H(+). Functionally, the RuvA-RuvB-RuvC complex processes Holliday junction (HJ) DNA during genetic recombination and DNA repair, while the RuvA-RuvB complex plays an important role in the rescue of blocked DNA replication forks via replication fork reversal (RFR). RuvA specifically binds to HJ cruciform DNA, conferring on it an open structure. The RuvB hexamer acts as an ATP-dependent pump, pulling dsDNA into and through the RuvAB complex. RuvB forms 2 homohexamers on either side of HJ DNA bound by 1 or 2 RuvA tetramers; 4 subunits per hexamer contact DNA at a time. Coordinated motions by a converter formed by DNA-disengaged RuvB subunits stimulates ATP hydrolysis and nucleotide exchange. Immobilization of the converter enables RuvB to convert the ATP-contained energy into a lever motion, pulling 2 nucleotides of DNA out of the RuvA tetramer per ATP hydrolyzed, thus driving DNA branch migration. The RuvB motors rotate together with the DNA substrate, which together with the progressing nucleotide cycle form the mechanistic basis for DNA recombination by continuous HJ branch migration. Branch migration allows RuvC to scan DNA until it finds its consensus sequence, where it cleaves and resolves cruciform DNA. The polypeptide is Holliday junction branch migration complex subunit RuvB (Ruegeria pomeroyi (strain ATCC 700808 / DSM 15171 / DSS-3) (Silicibacter pomeroyi)).